Here is a 339-residue protein sequence, read N- to C-terminus: MTRTITPDMTDDDLLEATLRPKSLDDYVGQEKAKGNLRVFIEAARGRGEALDHVLLYGPPGLGKTTLANIIACEMGVNIKSTSGPVIERPGDLAAILTNLETHDVLFIDEIHRLSHVVEEILYPAMEDFQLDIIIGQGPSARTIKLDLPKFTLVGATTRAGLLSSPLRDRFGVISRLEFYTIEELAFIITRSARILGMEIKPEGATELARRSRGTPRIANRLLRRVRDFAQVKADGVITLNVVQDALALLEIDHMGFDYMDRMILLTIIDKFGGGPVGLDTIAAAISEESDTIEDVYEPFLIQNGFLNRTPRGRVATRAAYEHFGRIVPEPPQGKLFQD.

Positions 1–180 are large ATPase domain (RuvB-L); the sequence is MTRTITPDMT…FGVISRLEFY (180 aa). ATP-binding positions include Leu-19, Arg-20, Gly-61, Lys-64, Thr-65, Thr-66, 127-129, Arg-170, Tyr-180, and Arg-217; that span reads EDF. Residue Thr-65 participates in Mg(2+) binding. The small ATPAse domain (RuvB-S) stretch occupies residues 181–251; that stretch reads TIEELAFIIT…VVQDALALLE (71 aa). The head domain (RuvB-H) stretch occupies residues 254–339; the sequence is HMGFDYMDRM…EPPQGKLFQD (86 aa). 2 residues coordinate DNA: Arg-309 and Arg-314.

This sequence belongs to the RuvB family. Homohexamer. Forms an RuvA(8)-RuvB(12)-Holliday junction (HJ) complex. HJ DNA is sandwiched between 2 RuvA tetramers; dsDNA enters through RuvA and exits via RuvB. An RuvB hexamer assembles on each DNA strand where it exits the tetramer. Each RuvB hexamer is contacted by two RuvA subunits (via domain III) on 2 adjacent RuvB subunits; this complex drives branch migration. In the full resolvosome a probable DNA-RuvA(4)-RuvB(12)-RuvC(2) complex forms which resolves the HJ.

Its subcellular location is the cytoplasm. It carries out the reaction ATP + H2O = ADP + phosphate + H(+). In terms of biological role, the RuvA-RuvB-RuvC complex processes Holliday junction (HJ) DNA during genetic recombination and DNA repair, while the RuvA-RuvB complex plays an important role in the rescue of blocked DNA replication forks via replication fork reversal (RFR). RuvA specifically binds to HJ cruciform DNA, conferring on it an open structure. The RuvB hexamer acts as an ATP-dependent pump, pulling dsDNA into and through the RuvAB complex. RuvB forms 2 homohexamers on either side of HJ DNA bound by 1 or 2 RuvA tetramers; 4 subunits per hexamer contact DNA at a time. Coordinated motions by a converter formed by DNA-disengaged RuvB subunits stimulates ATP hydrolysis and nucleotide exchange. Immobilization of the converter enables RuvB to convert the ATP-contained energy into a lever motion, pulling 2 nucleotides of DNA out of the RuvA tetramer per ATP hydrolyzed, thus driving DNA branch migration. The RuvB motors rotate together with the DNA substrate, which together with the progressing nucleotide cycle form the mechanistic basis for DNA recombination by continuous HJ branch migration. Branch migration allows RuvC to scan DNA until it finds its consensus sequence, where it cleaves and resolves cruciform DNA. In Geotalea daltonii (strain DSM 22248 / JCM 15807 / FRC-32) (Geobacter daltonii), this protein is Holliday junction branch migration complex subunit RuvB.